The sequence spans 513 residues: V-type proton ATPase subunit B, kidney isoform (513 aa).

Arginine 394 is an ATP binding site. The PDZ-binding motif lies at 510-513 (DTAL).

It belongs to the ATPase alpha/beta chains family. As to quaternary structure, V-ATPase is a heteromultimeric enzyme made up of two complexes: the ATP-hydrolytic V1 complex and the proton translocation V0 complex. The V1 complex consists of three catalytic AB heterodimers that form a heterohexamer, three peripheral stalks each consisting of EG heterodimers, one central rotor including subunits D and F, and the regulatory subunits C and H. The proton translocation complex V0 consists of the proton transport subunit a, a ring of proteolipid subunits c9c'', rotary subunit d, subunits e and f, and the accessory subunits ATP6AP1/Ac45 and ATP6AP2/PRR. Forms a complex with NHERF1 and SCL4A7. Kidney cortex and medulla.

The protein localises to the apical cell membrane. It localises to the basolateral cell membrane. Its function is as follows. Non-catalytic subunit of the V1 complex of vacuolar(H+)-ATPase (V-ATPase), a multisubunit enzyme composed of a peripheral complex (V1) that hydrolyzes ATP and a membrane integral complex (V0) that translocates protons. V-ATPase is responsible for acidifying and maintaining the pH of intracellular compartments and in some cell types, is targeted to the plasma membrane, where it is responsible for acidifying the extracellular environment. Essential for the proper assembly and activity of V-ATPase. In renal intercalated cells, mediates secretion of protons (H+) into the urine thereby ensuring correct urinary acidification. Required for optimal olfactory function by mediating the acidification of the nasal olfactory epithelium. The protein is V-type proton ATPase subunit B, kidney isoform (ATP6V1B1) of Bos taurus (Bovine).